The chain runs to 259 residues: GTP cyclohydrolase FolE2 (259 aa).

Belongs to the GTP cyclohydrolase IV family.

The enzyme catalyses GTP + H2O = 7,8-dihydroneopterin 3'-triphosphate + formate + H(+). The protein operates within cofactor biosynthesis; 7,8-dihydroneopterin triphosphate biosynthesis; 7,8-dihydroneopterin triphosphate from GTP: step 1/1. Functionally, converts GTP to 7,8-dihydroneopterin triphosphate. The protein is GTP cyclohydrolase FolE2 of Thermotoga petrophila (strain ATCC BAA-488 / DSM 13995 / JCM 10881 / RKU-1).